A 212-amino-acid polypeptide reads, in one-letter code: MKVTLVHLLFMMLLLLLGLGVGLGLGLHMAAAILENQPLDEFWPSDSQDTAEATEEGQGTRTTEALVLDNKEMAVPVWSEDTVLSEDEVGGSRMLRAKTLLQSKQGYLKFDLNIRDCNVMMAHKIKEHNQSCINDYTFIHEDPSTVGAVCNSPLVDCDLKGGKCHKSPRPFDLTLCKLAKPGQVTPNCHYLTYITEKVIIITCNNTKQLEIK.

A signal peptide spans 1–24 (MKVTLVHLLFMMLLLLLGLGVGLG). N-linked (GlcNAc...) asparagine glycans are attached at residues N129 and N204.

This sequence belongs to the pancreatic ribonuclease family. In terms of processing, the N-terminus is blocked. Glycosylated. As to expression, male-specific expression in proximal caput of the epididymis.

The protein localises to the secreted. In terms of biological role, secreted proximal epididymal protein required for post-testicular sperm maturation and male fertility. May be involved in sperm adhesion to the egg zona pellucida. Does not have ribonuclease activity. The polypeptide is Inactive ribonuclease-like protein 10 (Rnase10) (Rattus norvegicus (Rat)).